The chain runs to 226 residues: ATP synthase F(0) complex subunit a (226 aa).

Transmembrane regions (helical) follow at residues valine 13 to tryptophan 33, tryptophan 69 to leucine 89, threonine 97 to alanine 117, isoleucine 138 to valine 158, phenylalanine 179 to leucine 199, and leucine 201 to tyrosine 221.

The protein belongs to the ATPase A chain family. Component of the ATP synthase complex composed at least of ATP5F1A/subunit alpha, ATP5F1B/subunit beta, ATP5MC1/subunit c (homooctomer), MT-ATP6/subunit a, MT-ATP8/subunit 8, ATP5ME/subunit e, ATP5MF/subunit f, ATP5MG/subunit g, ATP5MK/subunit k, ATP5MJ/subunit j, ATP5F1C/subunit gamma, ATP5F1D/subunit delta, ATP5F1E/subunit epsilon, ATP5PF/subunit F6, ATP5PB/subunit b, ATP5PD/subunit d, ATP5PO/subunit OSCP. ATP synthase complex consists of a soluble F(1) head domain (subunits alpha(3) and beta(3)) - the catalytic core - and a membrane F(0) domain - the membrane proton channel (subunits c, a, 8, e, f, g, k and j). These two domains are linked by a central stalk (subunits gamma, delta, and epsilon) rotating inside the F1 region and a stationary peripheral stalk (subunits F6, b, d, and OSCP). Interacts with DNAJC30; interaction is direct.

It localises to the mitochondrion inner membrane. The catalysed reaction is H(+)(in) = H(+)(out). In terms of biological role, subunit a, of the mitochondrial membrane ATP synthase complex (F(1)F(0) ATP synthase or Complex V) that produces ATP from ADP in the presence of a proton gradient across the membrane which is generated by electron transport complexes of the respiratory chain. ATP synthase complex consist of a soluble F(1) head domain - the catalytic core - and a membrane F(1) domain - the membrane proton channel. These two domains are linked by a central stalk rotating inside the F(1) region and a stationary peripheral stalk. During catalysis, ATP synthesis in the catalytic domain of F(1) is coupled via a rotary mechanism of the central stalk subunits to proton translocation. With the subunit c (ATP5MC1), forms the proton-conducting channel in the F(0) domain, that contains two crucial half-channels (inlet and outlet) that facilitate proton movement from the mitochondrial intermembrane space (IMS) into the matrix. Protons are taken up via the inlet half-channel and released through the outlet half-channel, following a Grotthuss mechanism. The sequence is that of ATP synthase F(0) complex subunit a from Xenopus laevis (African clawed frog).